Reading from the N-terminus, the 1627-residue chain is Pappalysin-1 (1627 aa).

The signal sequence occupies residues 1–22 (MRLWSWVLHLGLLSAALGCGLA). A propeptide spanning residues 23–81 (ERPRRARRDPRAGRPPRPAAGPATCATRAARGRRASPPPPPPPGGAWEAVRVPRRRQQR) is cleaved from the precursor. Residues 23 to 99 (ERPRRARRDP…PSPPSRALYF (77 aa)) are disordered. Residues 42 to 51 (AGPATCATRA) show a composition bias toward low complexity. 17 disulfide bridges follow: Cys144-Cys235, Cys327-Cys622, Cys332-Cys657, Cys414-Cys428, Cys424-Cys440, Cys457-Cys473, Cys474-Cys485, Cys583-Cys600, Cys587-Cys612, Cys710-Cys878, Cys713-Cys881, Cys753-Cys835, Cys775-Cys781, Cys947-Cys975, Cys960-Cys971, Cys983-Cys990, and Cys999-Cys1011. The interval 272-583 (METHGAHTAL…FRGISEIQSC (312 aa)) is metalloprotease. N-linked (GlcNAc...) asparagine glycosylation is found at Asn390 and Asn402. Asn429 carries an N-linked (GlcNAc...) asparagine glycan. Residue Asn480 is glycosylated (N-linked (GlcNAc...) asparagine). His562 lines the Zn(2+) pocket. Glu563 is an active-site residue. Residues His566 and His572 each contribute to the Zn(2+) site. N-linked (GlcNAc...) asparagine glycans are attached at residues Asn601, Asn619, and Asn725. Positions 733-754 (SPSGHWSPREAEGHPDVEQPCK) are disordered. The segment covering 739 to 751 (SPREAEGHPDVEQ) has biased composition (basic and acidic residues). The N-linked (GlcNAc...) asparagine glycan is linked to Asn825. Asn1026 is a glycosylation site (N-linked (GlcNAc...) asparagine). Disulfide bonds link Cys1036/Cys1070, Cys1051/Cys1139, Cys1192/Cys1205, Cys1215/Cys1269, Cys1227/Cys1238, Cys1242/Cys1280, Cys1285/Cys1329, Cys1300/Cys1310, Cys1314/Cys1342, Cys1346/Cys1399, Cys1362/Cys1373, Cys1377/Cys1410, Cys1415/Cys1458, Cys1428/Cys1438, Cys1442/Cys1471, Cys1478/Cys1539, Cys1492/Cys1502, Cys1506/Cys1554, and Cys1558/Cys1576. Sushi domains follow at residues 1213–1282 (TDCP…ACEP), 1283–1344 (VDCS…LCEL), 1345–1412 (MCLA…ACVP), 1413–1473 (VTCD…VCQE), and 1476–1556 (GQCS…HCVK). Residues Asn1222 and Asn1226 are each glycosylated (N-linked (GlcNAc...) asparagine). Asn1323 carries N-linked (GlcNAc...) asparagine glycosylation. The N-linked (GlcNAc...) asparagine glycan is linked to Asn1465. N-linked (GlcNAc...) asparagine glycosylation is present at Asn1519.

This sequence belongs to the peptidase M43B family. In terms of assembly, homodimer; disulfide-linked. In pregnancy serum, predominantly found as a disulfide-linked 2:2 heterotetramer with the proform of PRG2. Requires Zn(2+) as cofactor. In terms of processing, there appear to be no free sulfhydryl groups. High levels in placenta and pregnancy serum. In placenta, expressed in X cells in septa and anchoring villi, and in syncytiotrophoblasts in the chorionic villi. Lower levels are found in a variety of other tissues including kidney, myometrium, endometrium, ovaries, breast, prostate, bone marrow, colon, fibroblasts and osteoblasts.

It is found in the secreted. It carries out the reaction Cleavage of the 135-Met-|-Lys-136 bond in insulin-like growth factor binding protein (IGFBP)-4, and the 143-Ser-|-Lys-144 bond in IGFBP-5.. Its activity is regulated as follows. Inhibited by complexation with the proform of PRG2. Metalloproteinase which specifically cleaves IGFBP-4 and IGFBP-5, resulting in release of bound IGF. Cleavage of IGFBP-4 is dramatically enhanced by the presence of IGF, whereas cleavage of IGFBP-5 is slightly inhibited by the presence of IGF. In Homo sapiens (Human), this protein is Pappalysin-1 (PAPPA).